We begin with the raw amino-acid sequence, 377 residues long: Succinyl-diaminopimelate desuccinylase (377 aa).

Histidine 67 serves as a coordination point for Zn(2+). The active site involves aspartate 69. Aspartate 100 contributes to the Zn(2+) binding site. Residue glutamate 134 is the Proton acceptor of the active site. Positions 135, 163, and 349 each coordinate Zn(2+).

It belongs to the peptidase M20A family. DapE subfamily. As to quaternary structure, homodimer. Requires Zn(2+) as cofactor. The cofactor is Co(2+).

The catalysed reaction is N-succinyl-(2S,6S)-2,6-diaminopimelate + H2O = (2S,6S)-2,6-diaminopimelate + succinate. It participates in amino-acid biosynthesis; L-lysine biosynthesis via DAP pathway; LL-2,6-diaminopimelate from (S)-tetrahydrodipicolinate (succinylase route): step 3/3. Functionally, catalyzes the hydrolysis of N-succinyl-L,L-diaminopimelic acid (SDAP), forming succinate and LL-2,6-diaminopimelate (DAP), an intermediate involved in the bacterial biosynthesis of lysine and meso-diaminopimelic acid, an essential component of bacterial cell walls. The protein is Succinyl-diaminopimelate desuccinylase of Haemophilus influenzae (strain PittGG).